Reading from the N-terminus, the 214-residue chain is MNQHLLEQFGTTHERVERGLAALRTGQGVLVADDADRENEGDLIFAAETLTPAQMAMMIRECSGIVCLCLPEERVSRLGLPMMVAHNTSSMGTAFTISIEAAEGVTTGVSAADRVRTVKAAIDDAACPGCLRSPGHVFPLRASPGGVLERRGHTEATVDLMRLAGLKPYGVLCELTNPDGTMARLPQLVDFAQRNRMTVLTVEDLVAYRQDKGL.

D-ribulose 5-phosphate contacts are provided by residues 37-38 (RE), aspartate 42, 150-154 (RRGHT), and glutamate 174. Residue glutamate 38 participates in Mg(2+) binding. Residue histidine 153 participates in Mg(2+) binding.

This sequence belongs to the DHBP synthase family. In terms of assembly, homodimer. The cofactor is Mg(2+). Mn(2+) serves as cofactor.

The enzyme catalyses D-ribulose 5-phosphate = (2S)-2-hydroxy-3-oxobutyl phosphate + formate + H(+). It participates in cofactor biosynthesis; riboflavin biosynthesis; 2-hydroxy-3-oxobutyl phosphate from D-ribulose 5-phosphate: step 1/1. Functionally, catalyzes the conversion of D-ribulose 5-phosphate to formate and 3,4-dihydroxy-2-butanone 4-phosphate. In Nitratidesulfovibrio vulgaris (strain ATCC 29579 / DSM 644 / CCUG 34227 / NCIMB 8303 / VKM B-1760 / Hildenborough) (Desulfovibrio vulgaris), this protein is 3,4-dihydroxy-2-butanone 4-phosphate synthase.